Here is a 102-residue protein sequence, read N- to C-terminus: Co-chaperonin GroES (102 aa).

This sequence belongs to the GroES chaperonin family. In terms of assembly, heptamer of 7 subunits arranged in a ring. Interacts with the chaperonin GroEL.

It localises to the cytoplasm. Functionally, together with the chaperonin GroEL, plays an essential role in assisting protein folding. The GroEL-GroES system forms a nano-cage that allows encapsulation of the non-native substrate proteins and provides a physical environment optimized to promote and accelerate protein folding. GroES binds to the apical surface of the GroEL ring, thereby capping the opening of the GroEL channel. In Chlamydia caviae (strain ATCC VR-813 / DSM 19441 / 03DC25 / GPIC) (Chlamydophila caviae), this protein is Co-chaperonin GroES.